The chain runs to 125 residues: Large ribosomal subunit protein bL17 (125 aa).

This sequence belongs to the bacterial ribosomal protein bL17 family. As to quaternary structure, part of the 50S ribosomal subunit. Contacts protein L32.

The protein is Large ribosomal subunit protein bL17 of Marinomonas sp. (strain MWYL1).